The sequence spans 262 residues: Vibriobactin-specific 2,3-dihydro-2,3-dihydroxybenzoate dehydrogenase (262 aa).

NAD(+) is bound at residue 12 to 36; it reads LLVGSARGIGFSVLEHLLQAGAQVM. Ser145 contacts substrate. Catalysis depends on Tyr158, which acts as the Proton acceptor.

Belongs to the short-chain dehydrogenases/reductases (SDR) family.

The enzyme catalyses (2S,3S)-2,3-dihydroxy-2,3-dihydrobenzoate + NAD(+) = 2,3-dihydroxybenzoate + NADH + H(+). It functions in the pathway siderophore biosynthesis; vibriobactin biosynthesis. Functionally, involved in an early step of the biosynthesis of the catechol siderophore vibriobactin. Vibriobactin is a chelating compound involved in transporting iron from the bacterial environment into the cell cytoplasm. The sequence is that of Vibriobactin-specific 2,3-dihydro-2,3-dihydroxybenzoate dehydrogenase (vibA) from Vibrio cholerae serotype O1 (strain ATCC 39315 / El Tor Inaba N16961).